The sequence spans 460 residues: GTPase Der (460 aa).

2 consecutive EngA-type G domains span residues 2 to 164 (QSII…HEEF) and 196 to 368 (IRVG…ENFT). GTP-binding positions include 8–15 (GKPNVGKS), 55–59 (DSGGL), 116–119 (NKVD), 202–209 (GRVNVGKS), 249–253 (DTAGI), and 313–316 (NKWD). The region spanning 369 to 453 (QKIQTSKLNT…PLVIASRKKG (85 aa)) is the KH-like domain.

Belongs to the TRAFAC class TrmE-Era-EngA-EngB-Septin-like GTPase superfamily. EngA (Der) GTPase family. In terms of assembly, associates with the 50S ribosomal subunit.

Functionally, GTPase that plays an essential role in the late steps of ribosome biogenesis. The chain is GTPase Der from Campylobacter jejuni subsp. jejuni serotype O:6 (strain 81116 / NCTC 11828).